Here is a 337-residue protein sequence, read N- to C-terminus: Biotin synthase (337 aa).

Residues 62-289 (NAVQLSTLIS…KAMVRLSAGR (228 aa)) enclose the Radical SAM core domain. Cysteine 77, cysteine 81, and cysteine 84 together coordinate [4Fe-4S] cluster. Cysteine 121, cysteine 152, cysteine 212, and arginine 284 together coordinate [2Fe-2S] cluster.

It belongs to the radical SAM superfamily. Biotin synthase family. Homodimer. [4Fe-4S] cluster serves as cofactor. Requires [2Fe-2S] cluster as cofactor.

The enzyme catalyses (4R,5S)-dethiobiotin + (sulfur carrier)-SH + 2 reduced [2Fe-2S]-[ferredoxin] + 2 S-adenosyl-L-methionine = (sulfur carrier)-H + biotin + 2 5'-deoxyadenosine + 2 L-methionine + 2 oxidized [2Fe-2S]-[ferredoxin]. Its pathway is cofactor biosynthesis; biotin biosynthesis; biotin from 7,8-diaminononanoate: step 2/2. In terms of biological role, catalyzes the conversion of dethiobiotin (DTB) to biotin by the insertion of a sulfur atom into dethiobiotin via a radical-based mechanism. In Nitrosomonas europaea (strain ATCC 19718 / CIP 103999 / KCTC 2705 / NBRC 14298), this protein is Biotin synthase.